The chain runs to 329 residues: L-lactate dehydrogenase (329 aa).

NAD(+) is bound by residues Val18, Glu39, Lys46, Tyr71, and 85 to 86 (GA). Gln88 and Arg94 together coordinate substrate. Residues Ser107, 124–126 (AAN), and Ser149 contribute to the NAD(+) site. Residue 126–129 (NPVD) participates in substrate binding. Residue 154 to 157 (DSAR) participates in substrate binding. 2 residues coordinate beta-D-fructose 1,6-bisphosphate: Arg159 and His174. His181 functions as the Proton acceptor in the catalytic mechanism. Tyr226 is subject to Phosphotyrosine. Thr235 contributes to the substrate binding site.

It belongs to the LDH/MDH superfamily. LDH family. In terms of assembly, homotetramer.

The protein resides in the cytoplasm. It carries out the reaction (S)-lactate + NAD(+) = pyruvate + NADH + H(+). It functions in the pathway fermentation; pyruvate fermentation to lactate; (S)-lactate from pyruvate: step 1/1. Its activity is regulated as follows. Allosterically activated by fructose 1,6-bisphosphate (FBP). Its function is as follows. Catalyzes the conversion of lactate to pyruvate. This Streptococcus equinus (Streptococcus bovis) protein is L-lactate dehydrogenase.